The following is a 736-amino-acid chain: Ethylene receptor 2 (736 aa).

3 consecutive transmembrane segments (helical) span residues 22–42, 53–73, and 94–114; these read ISDFFIAVAYFSIPIELVYFV, VLVQFGAFIVLCGATHLINLW, and AAVSCATAVMLVHIIPDLLSV. Residues Cys-64 and His-68 each coordinate Cu cation. Residues 157 to 305 form the GAF domain; sequence DRHTILKTTL…VVADQVAVAL (149 aa). Positions 348–585 constitute a Histidine kinase domain; sequence VMNHEMRTPM…TAIFIVKLGI (238 aa). At His-351 the chain carries Phosphohistidine; by autocatalysis. Residues 613 to 730 form the Response regulatory domain; the sequence is KVLVMDDNGF…KMRSVLSGLL (118 aa). Asp-661 is modified (4-aspartylphosphate).

The protein belongs to the ethylene receptor family. As to quaternary structure, homodimer; disulfide-linked. Cu cation is required as a cofactor. In terms of processing, activation probably requires a transfer of a phosphate group between a His in the transmitter domain and an Asp of the receiver domain. In terms of tissue distribution, leaves, flowers and fruits.

It localises to the endoplasmic reticulum membrane. The catalysed reaction is ATP + protein L-histidine = ADP + protein N-phospho-L-histidine.. In terms of biological role, may act early in the ethylene signal transduction pathway, possibly as an ethylene receptor, or as a regulator of the pathway. The polypeptide is Ethylene receptor 2 (ETR2) (Solanum lycopersicum (Tomato)).